Consider the following 207-residue polypeptide: Guanylate kinase (207 aa).

In terms of domain architecture, Guanylate kinase-like spans 4–184 (GTLYIVSAPS…ALMDFKAIIR (181 aa)). 11–18 (APSGAGKS) serves as a coordination point for ATP.

It belongs to the guanylate kinase family.

Its subcellular location is the cytoplasm. The catalysed reaction is GMP + ATP = GDP + ADP. Its function is as follows. Essential for recycling GMP and indirectly, cGMP. In Vibrio vulnificus (strain CMCP6), this protein is Guanylate kinase.